Reading from the N-terminus, the 105-residue chain is Heat shock protein HspQ (105 aa).

This sequence belongs to the HspQ family.

The protein resides in the cytoplasm. Its function is as follows. Involved in the degradation of certain denaturated proteins, including DnaA, during heat shock stress. The sequence is that of Heat shock protein HspQ from Yersinia enterocolitica serotype O:8 / biotype 1B (strain NCTC 13174 / 8081).